A 536-amino-acid chain; its full sequence is Cytochrome P450 monooxygenase macC (536 aa).

The chain crosses the membrane as a helical span at residues 2 to 22 (ALLYITTAALALLLLFLRAVF). Cys448 lines the heme pocket.

This sequence belongs to the cytochrome P450 family. Heme serves as cofactor.

Its subcellular location is the membrane. The protein operates within secondary metabolite biosynthesis; terpenoid biosynthesis. Cytochrome P450 monooxygenase; part of the gene cluster that mediates the biosynthesis of macrophorins, isoprenoid epoxycyclohexenones containing cyclized drimane moieties. The first step of the pathway is the synthesis of 6-methylsalicylic acid (6-MSA) by the polyketide synthase macA. 6-MSA is then converted to m-cresol by the decarboxylase macB. The cytochrome P450 monooxygenase macC then catalyzes the oxidation of m-cresol to toluquinol. Epoxidation of toluquinol is then performed by the short chain dehydrogenase macD, with the help of macE, and a further prenylation by macG leads to 7-deacetoxyyanuthone A. The next step is the hydroxylation of C-22 of 7-deacetoxyyanuthone A by the cytochrome P450 monooxygenase macH to yield 22-deacetylyanuthone A. O-Mevalon transferase macI then attaches mevalon to the hydroxyl group of 22-deacetylyanuthone A to produce yanuthone E. The terpene cyclase macJ catalyzes the cyclization of 22-deacetylyanuthone A to macrophorin A. MacJ is also able to catalyze cyclization of yanuthone E and 7-deacetoxyyanuthone A to their corresponding macrophorins. The macJ products can be further modified by macH and macJ, as well as by the FAD-dependent monooxygenase macF, to produce additional macrophorins, including 4'-oxomacrophorin A, 4'-oxomacrophorin D and 4'-oxomacrophorin E. In Penicillium terrestre, this protein is Cytochrome P450 monooxygenase macC.